The chain runs to 187 residues: MRLVLLGPPGSGKGTQATRLKEKLGIAHISTGDMLRAEIAAGSELGKQAKAVMDAGNLVSDDILLGMLESRLTQADVAKGFILDGYPRNVAQANAMDGLLAKIGQPLDAVVQLDVATELLVDRIAGRAKEQGRADDSPEAVRQRLQVYNDQTAPVVDFYAARGTLARVDGVGELDEIEARILAAIKG.

Gly-10–Thr-15 is an ATP binding site. Residues Ser-30–Val-59 are NMP. Residues Thr-31, Arg-36, Asn-57–Val-59, Gly-85–Arg-88, and Gln-92 contribute to the AMP site. The LID stretch occupies residues Gly-126–Asp-136. An ATP-binding site is contributed by Arg-127. Residues Arg-133 and Arg-144 each coordinate AMP. Gly-172 contacts ATP.

It belongs to the adenylate kinase family. In terms of assembly, monomer.

It localises to the cytoplasm. The enzyme catalyses AMP + ATP = 2 ADP. It participates in purine metabolism; AMP biosynthesis via salvage pathway; AMP from ADP: step 1/1. Catalyzes the reversible transfer of the terminal phosphate group between ATP and AMP. Plays an important role in cellular energy homeostasis and in adenine nucleotide metabolism. This is Adenylate kinase from Stenotrophomonas maltophilia (strain R551-3).